A 271-amino-acid polypeptide reads, in one-letter code: Short-chain dehydrogenase ptmH (271 aa).

Residues Ile-8, Thr-34, Lys-40, Asp-56, Asn-84, Tyr-148, Lys-152, Val-181, and Thr-183 each coordinate NADP(+). Residue Tyr-148 is the Proton acceptor of the active site. The active-site Lowers pKa of active site Tyr is Lys-152.

It belongs to the short-chain dehydrogenases/reductases (SDR) family.

It functions in the pathway secondary metabolite biosynthesis. Short-chain dehydrogenase; part of the gene cluster that mediates the biosynthesis of the indole diterpenes penitrems. The geranylgeranyl diphosphate (GGPP) synthase ptmG catalyzes the first step in penitrem biosynthesis via conversion of farnesyl pyrophosphate and isopentyl pyrophosphate into geranylgeranyl pyrophosphate (GGPP). Condensation of indole-3-glycerol phosphate with GGPP by the prenyl transferase ptmC then forms 3-geranylgeranylindole (3-GGI). Epoxidation by the FAD-dependent monooxygenase ptmM leads to a epoxidized-GGI that is substrate of the terpene cyclase ptmB for cyclization to yield paspaline. Paspaline is subsequently converted to 13-desoxypaxilline by the cytochrome P450 monooxygenase ptmP, the latter being then converted to paxilline by the cytochrome P450 monooxygenase ptmQ. Paxilline is converted to beta-paxitriol via C-10 ketoreduction by the short-chain dehydrogenase ptmH which can be monoprenylated at the C-20 by the indole diterpene prenyltransferase ptmD. A two-step elimination (acetylation and elimination) process performed by the O-acetyltransferase ptmV and ptmI leads to the production of the prenylated form of penijanthine. The FAD-linked oxidoreductase ptmO then converts the prenylated form of penijanthine into PC-M5 which is in turn transformed into PC-M4 by the aromatic dimethylallyltransferase ptmE. Five sequential oxidative transformations performed by the cytochrome P450 monooxygenases ptmK, ptmU, ptmL, ptmN and ptmJ yield the various penitrem compounds. PtmK, ptmU and ptmM are involved in the formation of the key bicyclic ring of penitrem C via the formation of the intermediates secopenitrem D and penitrem D. PtmL catalyzes the epoxidation of penitrem D and C to yield penitrem B and F, respectively. PtmJ catalyzes the last benzylic hydroxylation to convert penitrem B to prenitrem E and penitrem F to penitrem A. The polypeptide is Short-chain dehydrogenase ptmH (Penicillium ochrochloron).